The following is a 465-amino-acid chain: Plasma alpha-L-fucosidase (465 aa).

The N-terminal stretch at 1 to 26 (MRPQELPRLAFPLLLLLLLPPPPCPA) is a signal peptide. 2 N-linked (GlcNAc...) asparagine glycosylation sites follow: asparagine 169 and asparagine 237. At serine 299 the chain carries Phosphoserine. Asparagine 375 carries N-linked (GlcNAc...) asparagine glycosylation.

The protein belongs to the glycosyl hydrolase 29 family. As to quaternary structure, homotetramer.

The protein localises to the secreted. It catalyses the reaction an alpha-L-fucoside + H2O = L-fucose + an alcohol. Functionally, alpha-L-fucosidase is responsible for hydrolyzing the alpha-1,6-linked fucose joined to the reducing-end N-acetylglucosamine of the carbohydrate moieties of glycoproteins. In Pongo abelii (Sumatran orangutan), this protein is Plasma alpha-L-fucosidase (FUCA2).